Consider the following 292-residue polypeptide: tRNA pseudouridine synthase B (292 aa).

The Nucleophile role is filled by aspartate 38.

It belongs to the pseudouridine synthase TruB family. Type 1 subfamily.

The enzyme catalyses uridine(55) in tRNA = pseudouridine(55) in tRNA. Functionally, responsible for synthesis of pseudouridine from uracil-55 in the psi GC loop of transfer RNAs. The chain is tRNA pseudouridine synthase B from Gloeobacter violaceus (strain ATCC 29082 / PCC 7421).